The following is an 86-amino-acid chain: Small ribosomal subunit protein bS16 (86 aa).

It belongs to the bacterial ribosomal protein bS16 family.

The sequence is that of Small ribosomal subunit protein bS16 from Carboxydothermus hydrogenoformans (strain ATCC BAA-161 / DSM 6008 / Z-2901).